The sequence spans 818 residues: MESEQLFHRGYYRNSYNSITSASSDEELLDGAGAIMDFQTSEDDNLLDGDTAAGTHYTMTNGGSINSSTHLLDLLDEPIPGVGTYDDFHTIDWVREKCKDRERHRRINSKKKESAWEMTKSLYDAWSGWLVVTLTGLASGALAGLIDIAADWMTDLKEGICLSALWYNHEQCCWGSNETTFEERDKCPQWKTWAELIIGQAEGPGSYIMNYIMYIFWALSFAFLAVSLVKVFAPYACGSGIPEIKTILSGFIIRGYLGKWTLMIKTITLVLAVASGLSLGKEGPLVHVACCCGNIFSYLFPKYSTNEAKKREVLSAASAAGVSVAFGAPIGGVLFSLEEVSYYFPLKTLWRSFFAALVAAFVLRSINPFGNSRLVLFYVEYHTPWYLFELFPFILLGVFGGLWGAFFIRANIAWCRRRKSTKFGKYPVLEVIIVAAITAVIAFPNPYTRLNTSELIKELFTDCGPLESSSLCDYRNDMNASKIVDDIPDRPAGVGVYSAIWQLCLALIFKIIMTVFTFGIKVPSGLFIPSMAIGAIAGRIVGIAVEQLAYYHHDWFIFKEWCEVGADCITPGLYAMVGAAACLGGVTRMTVSLVVIVFELTGGLEYIVPLMAAVMTSKWVGDAFGREGIYEAHIRLNGYPFLDAKEEFTHTTLAADVMRPRRSDPPLAVLTQDNMTVDDIENMINETSYNGFPVIMSKESQRLVGFALRRDLTIAIESARKKQEGIVGSSRVCFAQHTPSLPAESPRPLKLRSILDMSPFTVTDHTPMEIVVDIFRKLGLRQCLVTHNGIVLGIITKKDILRHMAQTANQDPASIMFN.

Residues 1–125 (MESEQLFHRG…WEMTKSLYDA (125 aa)) lie on the Cytoplasmic side of the membrane. The Di-leucine internalization motif; mediates targeting to late endosome and lysosome membranes motif lies at 13–17 (RNSYN). An IP motif; mediates targeting to recycling endosomes motif is present at residues 18-19 (SI). 3 short sequence motifs (di-leucine internalization motif; mediates targeting to late endosome and lysosome membranes) span residues 28–29 (LL), 46–47 (LL), and 71–75 (LLDLL). A helical membrane pass occupies residues 126–163 (WSGWLVVTLTGLASGALAGLIDIAADWMTDLKEGICLS). Asparagine 177 carries an N-linked (GlcNAc...) asparagine glycan. A helical membrane pass occupies residues 209-232 (MNYIMYIFWALSFAFLAVSLVKVF). The Selectivity filter part_1 signature appears at 238–242 (GSGIP). Serine 239 lines the chloride pocket. An intramembrane region (helical) is located at residues 241-248 (IPEIKTIL). Transmembrane regions (helical) follow at residues 258–276 (GKWT…VASG) and 282–301 (EGPL…YLFP). The Selectivity filter part_2 motif lies at 280–284 (GKEGP). 2 consecutive intramembrane regions (helical) follow at residues 313 to 325 (VLSA…VSVA) and 329 to 337 (PIGGVLFSL). 3 helical membrane-spanning segments follow: residues 349 to 367 (LWRS…RSIN), 391 to 416 (FPFI…AWCR), and 423 to 443 (FGKY…VIAF). N-linked (GlcNAc...) asparagine glycosylation is found at asparagine 451 and asparagine 479. The next 2 helical transmembrane spans lie at 500-520 (IWQL…TFGI) and 525-544 (GLFI…VGIA). A Selectivity filter part_3 motif is present at residues 525–529 (GLFIP). Phenylalanine 527 is a binding site for chloride. Intramembrane regions (helical) lie at residues 572–586 (GLYA…LGGV) and 590–601 (TVSLVVIVFELT). Residues 602–605 (GGLE) constitute an intramembrane region (note=Loop between two helices). The chain crosses the membrane as a helical span at residues 606 to 624 (YIVPLMAAVMTSKWVGDAF). Topologically, residues 625-818 (GREGIYEAHI…NQDPASIMFN (194 aa)) are cytoplasmic. Tyrosine 630 lines the chloride pocket. 2 CBS domains span residues 658-722 (MRPR…ARKK) and 755-812 (LDMS…NQDP). Residues 689–691 (YNG) and 796–799 (TKKD) each bind ATP.

This sequence belongs to the chloride channel (TC 2.A.49) family. ClC-3/CLCN3 subfamily. Monomer and homodimer. Forms heterodimers with CLCN4. N-glycosylated. Detected in kidney, in the apical part of proximal tubule cells (at protein level). Expressed at high levels in the kidney while a low level expression is seen in the brain. Within the brain, it is prominent in the hippocampus, cerebral cortex and olfactory bulb. In terms of tissue distribution, brain, pancreas, kidney, liver, lung, retina, olfactory bulb, and spinal cord. As to expression, pancreas, kidney, liver, lung and retina. Brain, heart, pancreas, kidney, liver, lung, retina, olfactory bulb, and spinal cord. In terms of tissue distribution, expressed at high levels in the liver and at low levels in the brain.

It is found in the cytoplasmic vesicle. It localises to the secretory vesicle membrane. The protein resides in the lysosome membrane. The protein localises to the late endosome membrane. Its subcellular location is the cell membrane. It is found in the early endosome membrane. It localises to the recycling endosome membrane. Inhibited by Cd(2+). Its function is as follows. May influence large dense-core vesicle exocytosis in adrenal chromaffin cells. In terms of biological role, strongly outwardly rectifying, electrogenic H(+)/Cl(-)exchanger which mediates the exchange of chloride ions against protons. The CLC channel family contains both chloride channels and proton-coupled anion transporters that exchange chloride or another anion for protons. The presence of conserved gating glutamate residues is typical for family members that function as antiporters. Functionally, strongly outwardly rectifying, electrogenic H(+)/Cl(-)exchanger which mediates the exchange of chloride ions against protons. Facilitates endosomal acidification and chloride accumulation in hepatocytes. Strongly outwardly rectifying, electrogenic H(+)/Cl(-)exchanger which mediates the exchange of chloride ions against protons. This Mus musculus (Mouse) protein is H(+)/Cl(-) exchange transporter 3 (Clcn3).